An 81-amino-acid chain; its full sequence is LYR motif-containing protein 4 (81 aa).

It belongs to the complex I LYR family.

It is found in the mitochondrion. The protein localises to the nucleus. It participates in cofactor biosynthesis; iron-sulfur cluster biosynthesis. Required for nuclear and mitochondrial iron-sulfur protein biosynthesis. The sequence is that of LYR motif-containing protein 4 (lyrm4) from Dictyostelium discoideum (Social amoeba).